The chain runs to 397 residues: Transcription factor TGAL6 (397 aa).

Residues Pro-104–Arg-148 form the bZIP domain. Positions Lys-106 to Lys-126 are basic motif. The leucine-zipper stretch occupies residues Leu-132–Leu-146. The DOG1 domain maps to Ala-175 to Arg-390.

It belongs to the bZIP family.

The protein resides in the nucleus. Functionally, transcriptional regulator involved in defense response. The chain is Transcription factor TGAL6 from Oryza sativa subsp. japonica (Rice).